The following is a 941-amino-acid chain: Coiled-coil domain-containing protein 40 (941 aa).

Basic and acidic residues predominate over residues 1-14; the sequence is MEGRQEDQMNRQEE. Residues 1–31 are disordered; the sequence is MEGRQEDQMNRQEEVEQSNNYDRSVDHARTG. Coiled coils occupy residues 130-154, 210-430, 548-572, 609-765, 814-856, and 895-915; these read VQEMLARLQASLEVCQETNSEAAAQ, DIKA…QIMN, LEIHAATLSKELEEVGAKIKECQQL, IRRE…AKSK, AQLE…EIKE, and HKQEERLKMVSLTLQRLAQEY.

This sequence belongs to the CCDC40 family. As to expression, expressed in tissues that contain motile cilia, including Kupffer's vesicle, the floorplate, the pronephric tubules and the otic vesicle.

Its subcellular location is the cytoplasm. The protein resides in the cell projection. The protein localises to the cilium. Functionally, required for assembly of dynein regulatory complex (DRC) and inner dynein arm (IDA) complexes, which are responsible for ciliary beat regulation, thereby playing a central role in motility in cilia and flagella. Probably acts together with ccdc39 to form a molecular ruler that determines the 96 nanometer (nm) repeat length and arrangements of components in cilia and flagella. This is Coiled-coil domain-containing protein 40 (ccdc40) from Danio rerio (Zebrafish).